The chain runs to 660 residues: Bifunctional polymyxin resistance protein ArnA (660 aa).

Residues 1–304 (MKAVIFAYHD…TLGLVAGARL (304 aa)) form a formyltransferase ArnAFT region. The active-site Proton donor; for formyltransferase activity is H104. (6R)-10-formyltetrahydrofolate is bound by residues R114 and 136–140 (VKRAD). Residues 314-660 (RRIRVLILGV…RSVDVAERAS (347 aa)) are dehydrogenase ArnADH. Residues D347 and 368–369 (DI) each bind NAD(+). Residues A393, Y398, and 432–433 (TS) contribute to the UDP-alpha-D-glucuronate site. Catalysis depends on E434, which acts as the Proton acceptor; for decarboxylase activity. UDP-alpha-D-glucuronate contacts are provided by residues R460, N492, 526–535 (KLIDGGQQKR), and Y613. R619 (proton donor; for decarboxylase activity) is an active-site residue.

It in the N-terminal section; belongs to the Fmt family. UDP-L-Ara4N formyltransferase subfamily. The protein in the C-terminal section; belongs to the NAD(P)-dependent epimerase/dehydratase family. UDP-glucuronic acid decarboxylase subfamily. As to quaternary structure, homohexamer, formed by a dimer of trimers.

It carries out the reaction UDP-alpha-D-glucuronate + NAD(+) = UDP-beta-L-threo-pentopyranos-4-ulose + CO2 + NADH. It catalyses the reaction UDP-4-amino-4-deoxy-beta-L-arabinose + (6R)-10-formyltetrahydrofolate = UDP-4-deoxy-4-formamido-beta-L-arabinose + (6S)-5,6,7,8-tetrahydrofolate + H(+). It functions in the pathway nucleotide-sugar biosynthesis; UDP-4-deoxy-4-formamido-beta-L-arabinose biosynthesis; UDP-4-deoxy-4-formamido-beta-L-arabinose from UDP-alpha-D-glucuronate: step 1/3. Its pathway is nucleotide-sugar biosynthesis; UDP-4-deoxy-4-formamido-beta-L-arabinose biosynthesis; UDP-4-deoxy-4-formamido-beta-L-arabinose from UDP-alpha-D-glucuronate: step 3/3. The protein operates within bacterial outer membrane biogenesis; lipopolysaccharide biosynthesis. Functionally, bifunctional enzyme that catalyzes the oxidative decarboxylation of UDP-glucuronic acid (UDP-GlcUA) to UDP-4-keto-arabinose (UDP-Ara4O) and the addition of a formyl group to UDP-4-amino-4-deoxy-L-arabinose (UDP-L-Ara4N) to form UDP-L-4-formamido-arabinose (UDP-L-Ara4FN). The modified arabinose is attached to lipid A and is required for resistance to polymyxin and cationic antimicrobial peptides. The polypeptide is Bifunctional polymyxin resistance protein ArnA (Salmonella enteritidis PT4 (strain P125109)).